A 339-amino-acid chain; its full sequence is DNA-directed RNA polymerase subunit alpha (339 aa).

The alpha N-terminal domain (alpha-NTD) stretch occupies residues 1-237; it reads MENELMYMNW…EQMNVFINFD (237 aa). Residues 256–339 form an alpha C-terminal domain (alpha-CTD) region; that stretch reads FNENLYRSVN…PPAEDNKEGE (84 aa).

Belongs to the RNA polymerase alpha chain family. In terms of assembly, homodimer. The RNAP catalytic core consists of 2 alpha, 1 beta, 1 beta' and 1 omega subunit. When a sigma factor is associated with the core the holoenzyme is formed, which can initiate transcription.

The catalysed reaction is RNA(n) + a ribonucleoside 5'-triphosphate = RNA(n+1) + diphosphate. In terms of biological role, DNA-dependent RNA polymerase catalyzes the transcription of DNA into RNA using the four ribonucleoside triphosphates as substrates. The polypeptide is DNA-directed RNA polymerase subunit alpha (Desulfosudis oleivorans (strain DSM 6200 / JCM 39069 / Hxd3) (Desulfococcus oleovorans)).